The following is a 245-amino-acid chain: Polyhedrin (245 aa).

It belongs to the polyhedrin family.

In terms of biological role, major component of the virus occlusion bodies, which are large proteinaceous structures (polyhedra), that protect the virus from the outside environment for extended periods until they are ingested by insect larvae. This Lepidoptera (butterflies and moths) protein is Polyhedrin.